The chain runs to 73 residues: Translation initiation factor IF-1 (73 aa).

The 73-residue stretch at 1–73 (MAKKDGAIEI…TRGRIVYRYK (73 aa)) folds into the S1-like domain.

Belongs to the IF-1 family. As to quaternary structure, component of the 30S ribosomal translation pre-initiation complex which assembles on the 30S ribosome in the order IF-2 and IF-3, IF-1 and N-formylmethionyl-tRNA(fMet); mRNA recruitment can occur at any time during PIC assembly.

The protein localises to the cytoplasm. Its function is as follows. One of the essential components for the initiation of protein synthesis. Stabilizes the binding of IF-2 and IF-3 on the 30S subunit to which N-formylmethionyl-tRNA(fMet) subsequently binds. Helps modulate mRNA selection, yielding the 30S pre-initiation complex (PIC). Upon addition of the 50S ribosomal subunit IF-1, IF-2 and IF-3 are released leaving the mature 70S translation initiation complex. This is Translation initiation factor IF-1 from Thermobifida fusca (strain YX).